We begin with the raw amino-acid sequence, 540 residues long: MKLAASFLLMLLEVLLLPETPLSAEEALASTPGSPLSSTEYERFFALLTPTWKAETTCRLRATHGCRNPTLVQLDQYENHGLVPDGAVCSDLPYASWFESFCQFAQYRCSNHVYYAKRVRCSQPVSILSPNTLKEVESSAEVPLTSVTTPIVSRATATEHQAFQPWPERLNNNVEELLQSSLSLGGKEQQSSRKLGLEQQHKQEQIQEHKLEEAQEQEEQEEEEEEEEAKQEEGQGTEEGLDSVSRLQSDSEPKFQSKSLSSNPSFFTPRVREVESAPLMMENIQELIRSAQEMDEMNELYDDSWRSQSTGSLQQLPHTETLMVLCYSIMENTCTMTPTAKAWSYMEEEILGFGDSVCDNLGRRHTAACPLCAFCSLKLEQCHSEASVLRQQCDASHKIPFISPLLSAQSISTGNQAKIPEKGRFAGLEMYGGLSSEFWCNRLALKGCEDDRVANWLKAEFLSFQDGDLPTKICDTNYVQYPNYCSFKSQQCLLKNQNRKMSRMKCMLNEKYHVLSPAKGEEVILRWSQEFNTLTLGQFG.

The N-terminal stretch at 1–24 (MKLAASFLLMLLEVLLLPETPLSA) is a signal peptide. The pro-ACR binding stretch occupies residues 25 to 104 (EEALASTPGS…ASWFESFCQF (80 aa)). A propeptide spans 25-272 (EEALASTPGS…NPSFFTPRVR (248 aa)) (removed in mature form). The disordered stretch occupies residues 181–266 (SLSLGGKEQQ…SKSLSSNPSF (86 aa)). Residues 195–213 (LGLEQQHKQEQIQEHKLEE) are compositionally biased toward basic and acidic residues. A compositionally biased stretch (acidic residues) spans 214–241 (AQEQEEQEEEEEEEEAKQEEGQGTEEGL). Polar residues predominate over residues 256-266 (QSKSLSSNPSF). The pro-ACR binding stretch occupies residues 316–424 (LPHTETLMVL…NQAKIPEKGR (109 aa)).

As to quaternary structure, binds pro-ACR. Does not bind the mature form of ACR. Binds pro-ACR. Does not bind mature form of ACR. The N-terminus is blocked. In terms of processing, phosphorylated on Tyr residues in capacitated sperm. Post-translationally, synthesized as a 60-kDa precursor, the 32-kDa mature form is post-translationally produced by the removal of the N-terminal half of the precursor during sperm maturation in the testis and/or epididymis.

Its subcellular location is the cytoplasmic vesicle. It localises to the secretory vesicle. The protein resides in the acrosome. Functionally, acrosomal protein that maintains proacrosin (pro-ACR) as an enzymatically inactive zymogen in the acrosome. Involved also in the acrosome formation. Its function is as follows. Maintains pro-ACR as an enzymatically inactive zymogen in the acrosome until acrosomal exocytosis. Partially also contributes to the assembly of acrosomal proteins to form an acrosomal granule. Rodent specific isoform that participates in the formation of the acrosomal granule into the center of the acrosomal vesicle during early spermiogenesis. In the fertilization process promotes ACR release from the acrosome during acrosomal exocytosis. This is Acrosin-binding protein from Rattus norvegicus (Rat).